The chain runs to 217 residues: 3-isopropylmalate dehydratase small subunit (217 aa).

This sequence belongs to the LeuD family. LeuD type 1 subfamily. As to quaternary structure, heterodimer of LeuC and LeuD.

It catalyses the reaction (2R,3S)-3-isopropylmalate = (2S)-2-isopropylmalate. It functions in the pathway amino-acid biosynthesis; L-leucine biosynthesis; L-leucine from 3-methyl-2-oxobutanoate: step 2/4. Catalyzes the isomerization between 2-isopropylmalate and 3-isopropylmalate, via the formation of 2-isopropylmaleate. The sequence is that of 3-isopropylmalate dehydratase small subunit from Paraburkholderia phymatum (strain DSM 17167 / CIP 108236 / LMG 21445 / STM815) (Burkholderia phymatum).